We begin with the raw amino-acid sequence, 54 residues long: 2-aminomuconate deaminase (54 aa).

Homohexamer.

It catalyses the reaction (2Z,4E)-2-aminomuconate + H2O = (3E)-2-oxohex-3-enedioate + NH4(+). The protein operates within xenobiotic degradation; nitrobenzene degradation. Functionally, converts 2-aminomuconate to 4-oxalocrotonate, an intermediate step in the biodegradation of nitrobenzene. The chain is 2-aminomuconate deaminase from Ectopseudomonas oleovorans (Pseudomonas oleovorans).